We begin with the raw amino-acid sequence, 232 residues long: uncharacterized protein (232 aa).

Belongs to the mimivirus R73/L269/L862 family.

This is an uncharacterized protein from Acanthamoeba polyphaga mimivirus (APMV).